A 283-amino-acid chain; its full sequence is Non-selective voltage-gated ion channel VDAC1 (283 aa).

The residue at position 2 (Ala-2) is an N-acetylalanine. Lys-12 serves as a coordination point for ATP. Lys-12 is covalently cross-linked (Glycyl lysine isopeptide (Lys-Gly) (interchain with G-Cter in ubiquitin)). At Ser-13 the chain carries Phosphoserine. Thr-19 carries the phosphothreonine modification. An ATP-binding site is contributed by Lys-20. The residue at position 20 (Lys-20) is an N6-acetyllysine; alternate. N6-succinyllysine; alternate is present on Lys-20. Residue Lys-20 forms a Glycyl lysine isopeptide (Lys-Gly) (interchain with G-Cter in ubiquitin); alternate linkage. The next 2 membrane-spanning stretches (beta stranded) occupy residues 26–35 (LIKLDLKTKS) and 39–47 (LEFTSSGSA). Glycyl lysine isopeptide (Lys-Gly) (interchain with G-Cter in ubiquitin) cross-links involve residues Lys-53 and Lys-61. The chain crosses the membrane as a beta stranded span at residues 54–64 (VTGSLETKYRW). Residue Tyr-67 is modified to Phosphotyrosine. 3 beta stranded membrane-spanning segments follow: residues 69 to 76 (LTFTEKWN), 80 to 89 (TLGTEITVED), and 95 to 104 (LKLTFDSSFS). A Phosphothreonine modification is found at Thr-107. Lys-109 is modified (N6-acetyllysine; alternate). A Glycyl lysine isopeptide (Lys-Gly) (interchain with G-Cter in ubiquitin); alternate cross-link involves residue Lys-109. Lys-110 participates in a covalent cross-link: Glycyl lysine isopeptide (Lys-Gly) (interchain with G-Cter in ubiquitin). Beta stranded transmembrane passes span 111 to 120 (NAKIKTGYKR), 123 to 130 (VNLGCDVD), 137 to 145 (SIRGALVLG), and 150 to 158 (LAGYQMNFE). A Glycyl lysine isopeptide (Lys-Gly) (interchain with G-Cter in ubiquitin) cross-link involves residue Lys-161. The next 6 membrane-spanning stretches (beta stranded) occupy residues 163–175 (RVTQ…GYKT), 178–185 (FQLHTNVN), 189–198 (EFGGSIYQKV), 202–211 (LETAVNLAWT), 218–227 (RFGIAAKYQI), and 231–238 (ACFSAKVN). Ser-193 bears the Phosphoserine; by NEK1 mark. Phosphoserine is present on Ser-240. 242–244 (LIG) contributes to the NAD(+) binding site. The chain crosses the membrane as a beta stranded span at residues 242–251 (LIGLGYTQTL). Lys-252 carries the post-translational modification N6-acetyllysine. A beta stranded membrane pass occupies residues 254–263 (GIKLTLSALL). 260–264 (SALLD) provides a ligand contact to NAD(+). Lys-266 is modified (N6-acetyllysine; alternate). Residue Lys-266 forms a Glycyl lysine isopeptide (Lys-Gly) (interchain with G-Cter in ubiquitin); alternate linkage. The beta stranded transmembrane segment at 273-282 (HKLGLGLEFQ) threads the bilayer. Residue Lys-274 forms a Glycyl lysine isopeptide (Lys-Gly) (interchain with G-Cter in ubiquitin) linkage.

The protein belongs to the eukaryotic mitochondrial porin family. Homodimer and homotrimer; in response to cyclic AMP or calcium; oligomerization is required for scramblase activity. Component of the mitochondrial permeability transition pore complex (mPTPC), at least composed of SPG7, VDAC1 and PPIF. Interacts with SPG7, NIPSNAP2 and SLC25A30. Interacts with hexokinases including HK1. The HK1-VDAC1 complex interacts with ATF2. Interacts with BCL2L1. Interacts with BAK1. Interacts with RTL10/BOP (via BH3 domain). Interacts with amyloid-beta and APP; induces VDAC1 dephosphorylation. Interacts with TMEM41B. Interacts with BCAP31. Interacts with HSPA9; this interaction couples ITPR1 to VDAC1. Phosphorylation at Ser-193 by NEK1 promotes the closed conformational state preventing excessive mitochondrial membrane permeability and subsequent apoptotic cell death after injury. Phosphorylation by the AKT-GSK3B axis stabilizes the protein probably by preventing ubiquitin-mediated proteasomal degradation. In terms of processing, ubiquitinated. Undergoes monoubiquitination and polyubiquitination by PRKN; monoubiquitination at Lys-274 inhibits apoptosis, whereas polyubiquitination leads to its degradation and promotes mitophagy. Deubiquitinated by USP30.

Its subcellular location is the mitochondrion outer membrane. It is found in the cell membrane. It localises to the membrane raft. It carries out the reaction chloride(in) = chloride(out). The catalysed reaction is K(+)(in) = K(+)(out). It catalyses the reaction ATP(in) = ATP(out). The enzyme catalyses Ca(2+)(in) = Ca(2+)(out). It carries out the reaction Na(+)(in) = Na(+)(out). The catalysed reaction is Mg(2+)(in) = Mg(2+)(out). It catalyses the reaction L-glutamate(out) = L-glutamate(in). The enzyme catalyses dopamine(out) = dopamine(in). It carries out the reaction acetylcholine(in) = acetylcholine(out). The catalysed reaction is Fe(III)-[cytochrome c](out) = Fe(III)-[cytochrome c](in). It catalyses the reaction a 1,2-diacyl-sn-glycero-3-phosphocholine(in) = a 1,2-diacyl-sn-glycero-3-phosphocholine(out). The enzyme catalyses a 1,2-diacyl-sn-glycero-3-phospho-L-serine(in) = a 1,2-diacyl-sn-glycero-3-phospho-L-serine(out). With respect to regulation, inhibited by nitric oxide. Non-selective voltage-gated ion channel that mediates the transport of anions and cations through the mitochondrion outer membrane and plasma membrane. The channel at the outer mitochondrial membrane allows diffusion of small hydrophilic molecules; in the plasma membrane it is involved in cell volume regulation and apoptosis. It adopts an open conformation at low or zero membrane potential and a closed conformation at potentials above 30-40 mV. The open state has a weak anion selectivity whereas the closed state is cation-selective. Binds various signaling molecules, including the sphingolipid ceramide, the phospholipid phosphatidylcholine, and the sterols cholesterol and oxysterol. In depolarized mitochondria, acts downstream of PRKN and PINK1 to promote mitophagy or prevent apoptosis; polyubiquitination by PRKN promotes mitophagy, while monoubiquitination by PRKN decreases mitochondrial calcium influx which ultimately inhibits apoptosis. May participate in the formation of the permeability transition pore complex (PTPC) responsible for the release of mitochondrial products that triggers apoptosis. May mediate ATP export from cells. Part of a complex composed of HSPA9, ITPR1 and VDAC1 that regulates mitochondrial calcium-dependent apoptosis by facilitating calcium transport from the ER lumen to the mitochondria intermembrane space thus providing calcium for the downstream calcium channel MCU that directly releases it into mitochondria matrix. Mediates cytochrome c efflux. Its function is as follows. Catalyzes the scrambling of phospholipids across the outer mitochondrial membrane; the mechanism is unrelated to channel activity and is capable of translocating both anionic and zwitterionic phospholipids. The polypeptide is Non-selective voltage-gated ion channel VDAC1 (Sus scrofa (Pig)).